We begin with the raw amino-acid sequence, 339 residues long: D-alanine--D-alanine ligase (339 aa).

The ATP-grasp domain occupies 126 to 333; it reads KQVLASVGMP…YSELVTRLVE (208 aa). An ATP-binding site is contributed by 158 to 213; it reads AGELGYPLFVKPANLGSSVGISKVSGPGELERALDLAFSLGRRVILEAMTAHKPRE. Residues aspartate 286, glutamate 300, and asparagine 302 each coordinate Mg(2+).

It belongs to the D-alanine--D-alanine ligase family. Requires Mg(2+) as cofactor. Mn(2+) serves as cofactor.

The protein localises to the cytoplasm. It catalyses the reaction 2 D-alanine + ATP = D-alanyl-D-alanine + ADP + phosphate + H(+). It functions in the pathway cell wall biogenesis; peptidoglycan biosynthesis. Cell wall formation. This chain is D-alanine--D-alanine ligase, found in Deinococcus geothermalis (strain DSM 11300 / CIP 105573 / AG-3a).